We begin with the raw amino-acid sequence, 471 residues long: Putative multidrug resistance protein MdtD (471 aa).

Transmembrane regions (helical) follow at residues 12–32 (LWIVAFGFFMQSLDTTIVNTA), 49–69 (MIIVSYVLTVAVMLPASGWLA), 77–97 (IFFTAIVLFTAGSLFCAQAST), 102–124 (VMARVLQGVGGAMMVPVGRLTVM), 138–158 (FVTLPGQVGPLLGPALGGVLV), 165–185 (WIFLINIPVGIVGAIATLCLM), 195–215 (FDLSGFLLLAAGMATLTLALD), 220–240 (LGISPAWLAGLVAVGLCALLL), 263–283 (FSLGLGGSFAGRIGSGMLPFM), 286–306 (VFLQIGLGFSPFHAGLMMIPM), 329–351 (VLVASTLGLAAVSLLFMFSALAG), 393–413 (LLSMVMQLSMSIGVTIAGLLL), and 431–451 (VFLYTYLSMAAIIALPALIFS).

This sequence belongs to the major facilitator superfamily. TCR/Tet family.

It is found in the cell inner membrane. The chain is Putative multidrug resistance protein MdtD from Klebsiella pneumoniae subsp. pneumoniae (strain ATCC 700721 / MGH 78578).